Here is a 66-residue protein sequence, read N- to C-terminus: Large ribosomal subunit protein bL35 (66 aa).

Positions 1-26 are enriched in basic residues; that stretch reads MPKMKTHRGSAKRFKKTASGKLKRGH. The interval 1 to 28 is disordered; that stretch reads MPKMKTHRGSAKRFKKTASGKLKRGHAY.

This sequence belongs to the bacterial ribosomal protein bL35 family.

In Geobacillus thermodenitrificans (strain NG80-2), this protein is Large ribosomal subunit protein bL35.